A 343-amino-acid polypeptide reads, in one-letter code: Biotin synthase (343 aa).

The region spanning 64–291 is the Radical SAM core domain; the sequence is NTVQLSTLLS…RAMVRLSAGR (228 aa). Positions 79, 83, and 86 each coordinate [4Fe-4S] cluster. Residues Cys123, Cys154, Cys214, and Arg286 each coordinate [2Fe-2S] cluster.

Belongs to the radical SAM superfamily. Biotin synthase family. Homodimer. [4Fe-4S] cluster serves as cofactor. The cofactor is [2Fe-2S] cluster.

It carries out the reaction (4R,5S)-dethiobiotin + (sulfur carrier)-SH + 2 reduced [2Fe-2S]-[ferredoxin] + 2 S-adenosyl-L-methionine = (sulfur carrier)-H + biotin + 2 5'-deoxyadenosine + 2 L-methionine + 2 oxidized [2Fe-2S]-[ferredoxin]. Its pathway is cofactor biosynthesis; biotin biosynthesis; biotin from 7,8-diaminononanoate: step 2/2. In terms of biological role, catalyzes the conversion of dethiobiotin (DTB) to biotin by the insertion of a sulfur atom into dethiobiotin via a radical-based mechanism. This chain is Biotin synthase, found in Cupriavidus necator (strain ATCC 17699 / DSM 428 / KCTC 22496 / NCIMB 10442 / H16 / Stanier 337) (Ralstonia eutropha).